A 530-amino-acid polypeptide reads, in one-letter code: Transcriptional regulator VasH (530 aa).

Residues 193–422 form the Sigma-54 factor interaction domain; sequence LIGESAAMQK…LKHLIEFGCA (230 aa). ATP-binding positions include 221–228 and 284–293; these read GETGTGKE and ANGGTLFLDE.

In terms of biological role, transcriptional regulator of the type VI secretion system. This Vibrio cholerae serotype O1 (strain ATCC 39315 / El Tor Inaba N16961) protein is Transcriptional regulator VasH.